A 327-amino-acid chain; its full sequence is Phenylalanine--tRNA ligase alpha subunit (327 aa).

Glu252 provides a ligand contact to Mg(2+).

This sequence belongs to the class-II aminoacyl-tRNA synthetase family. Phe-tRNA synthetase alpha subunit type 1 subfamily. Tetramer of two alpha and two beta subunits. Mg(2+) is required as a cofactor.

It localises to the cytoplasm. It catalyses the reaction tRNA(Phe) + L-phenylalanine + ATP = L-phenylalanyl-tRNA(Phe) + AMP + diphosphate + H(+). The sequence is that of Phenylalanine--tRNA ligase alpha subunit from Shigella boydii serotype 18 (strain CDC 3083-94 / BS512).